The sequence spans 239 residues: Large ribosomal subunit protein uL1 (239 aa).

This sequence belongs to the universal ribosomal protein uL1 family. In terms of assembly, part of the 50S ribosomal subunit.

In terms of biological role, binds directly to 23S rRNA. The L1 stalk is quite mobile in the ribosome, and is involved in E site tRNA release. Functionally, protein L1 is also a translational repressor protein, it controls the translation of the L11 operon by binding to its mRNA. In Rickettsia akari (strain Hartford), this protein is Large ribosomal subunit protein uL1.